A 93-amino-acid polypeptide reads, in one-letter code: Alpha-defensin 7 (93 aa).

An N-terminal signal peptide occupies residues 1–19; it reads MKTLILLSALVLLAFQVQA. Residues 20–58 constitute a propeptide that is removed on maturation; sequence DPIQNTDEETKTEEQPGEDDQAVSVSFGDPEGSSLQEES. The interval 22-56 is disordered; that stretch reads IQNTDEETKTEEQPGEDDQAVSVSFGDPEGSSLQE. 3 cysteine pairs are disulfide-bonded: C64-C92, C66-C81, and C71-C91.

This sequence belongs to the alpha-defensin family. As to expression, paneth cells of the small bowel.

It localises to the secreted. In terms of biological role, probably contributes to the antimicrobial barrier function of the small bowel mucosa. The sequence is that of Alpha-defensin 7 (Defa7) from Mus musculus (Mouse).